The sequence spans 156 residues: Small ribosomal subunit protein uS7 (156 aa).

This sequence belongs to the universal ribosomal protein uS7 family. Part of the 30S ribosomal subunit. Contacts proteins S9 and S11.

In terms of biological role, one of the primary rRNA binding proteins, it binds directly to 16S rRNA where it nucleates assembly of the head domain of the 30S subunit. Is located at the subunit interface close to the decoding center, probably blocks exit of the E-site tRNA. The protein is Small ribosomal subunit protein uS7 of Coprothermobacter proteolyticus (strain ATCC 35245 / DSM 5265 / OCM 4 / BT).